A 693-amino-acid polypeptide reads, in one-letter code: Elongation factor G (693 aa).

Residues 8–282 (EKTRNIGIMA…AVVDYLPSPL (275 aa)) form the tr-type G domain. GTP is bound by residues 17-24 (AHVDAGKT), 81-85 (DTPGH), and 135-138 (NKMD).

This sequence belongs to the TRAFAC class translation factor GTPase superfamily. Classic translation factor GTPase family. EF-G/EF-2 subfamily.

Its subcellular location is the cytoplasm. Its function is as follows. Catalyzes the GTP-dependent ribosomal translocation step during translation elongation. During this step, the ribosome changes from the pre-translocational (PRE) to the post-translocational (POST) state as the newly formed A-site-bound peptidyl-tRNA and P-site-bound deacylated tRNA move to the P and E sites, respectively. Catalyzes the coordinated movement of the two tRNA molecules, the mRNA and conformational changes in the ribosome. The chain is Elongation factor G from Streptococcus mutans serotype c (strain ATCC 700610 / UA159).